A 274-amino-acid chain; its full sequence is Shikimate dehydrogenase (NADP(+)) (274 aa).

Shikimate is bound by residues Ser14 to Ser16 and Thr60. The active-site Proton acceptor is the Lys64. Residue Glu76 participates in NADP(+) binding. Positions 85 and 101 each coordinate shikimate. NADP(+) contacts are provided by residues Gly126–Ala130, Asn150–Lys155, and Met214. Tyr216 is a shikimate binding site. Position 238 (Gly238) interacts with NADP(+).

It belongs to the shikimate dehydrogenase family. In terms of assembly, homodimer.

The enzyme catalyses shikimate + NADP(+) = 3-dehydroshikimate + NADPH + H(+). It functions in the pathway metabolic intermediate biosynthesis; chorismate biosynthesis; chorismate from D-erythrose 4-phosphate and phosphoenolpyruvate: step 4/7. Functionally, involved in the biosynthesis of the chorismate, which leads to the biosynthesis of aromatic amino acids. Catalyzes the reversible NADPH linked reduction of 3-dehydroshikimate (DHSA) to yield shikimate (SA). The sequence is that of Shikimate dehydrogenase (NADP(+)) from Pseudomonas paraeruginosa (strain DSM 24068 / PA7) (Pseudomonas aeruginosa (strain PA7)).